The sequence spans 1159 residues: Dynein regulatory complex subunit 7 (1159 aa).

LRR repeat units lie at residues 21-46 (MEARRTYRLNMGYAGLKQLPPGFVEL), 51-74 (NPHITELELSSNDLTDLPDELEEF), 75-97 (RYLRILRLKYNQLKRIPAVVYRL), 99-120 (QLMVFDASGNRIQKVDDAIGHL), 121-143 (SLLKELDVSGNEITTLPESLSTL), 144-166 (PKLEVLQVENNRLELLPESLGEL), 168-189 (GVIKMDLSTNNLRYLPASMGQL), 190-212 (KKVQRIDVGNNLLTKVPPSMGHL), and 214-235 (TLKEFNLRYNHLDDRYKAKVEE). Kelch repeat units lie at residues 309 to 360 (MLLI…YDEE), 363 to 413 (RLVV…FWAG), 415 to 463 (MVLF…IGHG), 465 to 513 (LLFV…VHRD), and 515 to 571 (LYLL…LWNG). Residues 827 to 837 (EDRGMRSRADG) show a composition bias toward basic and acidic residues. Positions 827–857 (EDRGMRSRADGNADESETEGGGGLDDGEGVE) are disordered. Residues 1050–1137 (VRIKAEESEE…RRLRRHEEQA (88 aa)) are a coiled coil.

Belongs to the DRC7 family. As to quaternary structure, component of the nexin-dynein regulatory complex (N-DRC). Interacts with DRC5. Phosphorylated.

Its subcellular location is the cell projection. The protein resides in the cilium. It is found in the flagellum. The protein localises to the cytoplasm. It localises to the cytoskeleton. Its subcellular location is the cilium axoneme. The protein resides in the flagellum axoneme. Functionally, component of the nexin-dynein regulatory complex (N-DRC) a key regulator of ciliary/flagellar motility which maintains the alignment and integrity of the distal axoneme and regulates microtubule sliding in motile axonemes. Involved in the regulation of flagellar motility. This Chlamydomonas reinhardtii (Chlamydomonas smithii) protein is Dynein regulatory complex subunit 7 (DRC7).